Reading from the N-terminus, the 316-residue chain is ATP synthase gamma chain (316 aa).

This sequence belongs to the ATPase gamma chain family. In terms of assembly, F-type ATPases have 2 components, CF(1) - the catalytic core - and CF(0) - the membrane proton channel. CF(1) has five subunits: alpha(3), beta(3), gamma(1), delta(1), epsilon(1). CF(0) has three main subunits: a, b and c.

The protein resides in the cellular thylakoid membrane. In terms of biological role, produces ATP from ADP in the presence of a proton gradient across the membrane. The gamma chain is believed to be important in regulating ATPase activity and the flow of protons through the CF(0) complex. This Synechococcus sp. (strain WH7803) protein is ATP synthase gamma chain.